Consider the following 344-residue polypeptide: uncharacterized protein (344 aa).

The segment at 190 to 232 (SGKRVRSAKKSGADAARASEGATCDRASSESVSPTARPPAQAS) is disordered.

This is an uncharacterized protein from Treponema pallidum (strain Nichols).